A 280-amino-acid chain; its full sequence is Pantothenate synthetase (280 aa).

26–33 provides a ligand contact to ATP; it reads MGNLHEGH. Residue His33 is the Proton donor of the active site. Residue Gln57 coordinates (R)-pantoate. Gln57 provides a ligand contact to beta-alanine. 145 to 148 is a binding site for ATP; that stretch reads GKKD. Gln151 lines the (R)-pantoate pocket. Residues Val174 and 182–185 contribute to the ATP site; that span reads LSSR.

Belongs to the pantothenate synthetase family. As to quaternary structure, homodimer.

It localises to the cytoplasm. The catalysed reaction is (R)-pantoate + beta-alanine + ATP = (R)-pantothenate + AMP + diphosphate + H(+). Its pathway is cofactor biosynthesis; (R)-pantothenate biosynthesis; (R)-pantothenate from (R)-pantoate and beta-alanine: step 1/1. Catalyzes the condensation of pantoate with beta-alanine in an ATP-dependent reaction via a pantoyl-adenylate intermediate. The polypeptide is Pantothenate synthetase (Bordetella avium (strain 197N)).